A 291-amino-acid chain; its full sequence is Urease accessory protein UreD (291 aa).

It belongs to the UreD family. UreD, UreF and UreG form a complex that acts as a GTP-hydrolysis-dependent molecular chaperone, activating the urease apoprotein by helping to assemble the nickel containing metallocenter of UreC. The UreE protein probably delivers the nickel.

The protein localises to the cytoplasm. Functionally, required for maturation of urease via the functional incorporation of the urease nickel metallocenter. The polypeptide is Urease accessory protein UreD (Acinetobacter baumannii (strain ACICU)).